Reading from the N-terminus, the 380-residue chain is L-lactate dehydrogenase (380 aa).

The FMN hydroxy acid dehydrogenase domain maps to 1–380 (MIISSTTDFR…DRSILAKTDR (380 aa)). Tyrosine 24 provides a ligand contact to substrate. FMN contacts are provided by serine 106 and glutamine 127. Position 129 (tyrosine 129) interacts with substrate. Residue threonine 155 coordinates FMN. Arginine 164 contributes to the substrate binding site. Lysine 251 is an FMN binding site. Histidine 275 (proton acceptor) is an active-site residue. Arginine 278 contributes to the substrate binding site. 306-330 (DGGVRSGLDVVRMLALGAKGVLLGR) lines the FMN pocket.

This sequence belongs to the FMN-dependent alpha-hydroxy acid dehydrogenase family. It depends on FMN as a cofactor.

It localises to the cell inner membrane. The catalysed reaction is (S)-lactate + A = pyruvate + AH2. In terms of biological role, catalyzes the conversion of L-lactate to pyruvate. Is coupled to the respiratory chain. This chain is L-lactate dehydrogenase, found in Caulobacter sp. (strain K31).